The chain runs to 45 residues: Large ribosomal subunit protein bL34 (45 aa).

Belongs to the bacterial ribosomal protein bL34 family.

The sequence is that of Large ribosomal subunit protein bL34 from Corynebacterium urealyticum (strain ATCC 43042 / DSM 7109).